The sequence spans 122 residues: Large ribosomal subunit protein uL14 (122 aa).

It belongs to the universal ribosomal protein uL14 family. Part of the 50S ribosomal subunit. Forms a cluster with proteins L3 and L19. In the 70S ribosome, L14 and L19 interact and together make contacts with the 16S rRNA in bridges B5 and B8.

Functionally, binds to 23S rRNA. Forms part of two intersubunit bridges in the 70S ribosome. This Saccharopolyspora erythraea (strain ATCC 11635 / DSM 40517 / JCM 4748 / NBRC 13426 / NCIMB 8594 / NRRL 2338) protein is Large ribosomal subunit protein uL14.